Consider the following 883-residue polypeptide: Phosphoenolpyruvate carboxylase (883 aa).

Active-site residues include His-138 and Lys-546.

This sequence belongs to the PEPCase type 1 family. Mg(2+) is required as a cofactor.

The catalysed reaction is oxaloacetate + phosphate = phosphoenolpyruvate + hydrogencarbonate. Its function is as follows. Forms oxaloacetate, a four-carbon dicarboxylic acid source for the tricarboxylic acid cycle. The polypeptide is Phosphoenolpyruvate carboxylase (Salmonella gallinarum (strain 287/91 / NCTC 13346)).